A 149-amino-acid chain; its full sequence is Protein SprT-like (149 aa).

The 142-residue stretch at 6–147 (LQALVEQISI…VCGRCRSKLK (142 aa)) folds into the SprT-like domain. Residue His-67 coordinates Zn(2+). Glu-68 is an active-site residue. His-71 is a Zn(2+) binding site.

This sequence belongs to the SprT family. Requires Zn(2+) as cofactor.

It is found in the cytoplasm. This Geobacillus kaustophilus (strain HTA426) protein is Protein SprT-like.